The primary structure comprises 360 residues: DNA replication and repair protein RecF (360 aa).

Position 30-37 (30-37 (GDNAQGKT)) interacts with ATP.

It belongs to the RecF family.

It localises to the cytoplasm. In terms of biological role, the RecF protein is involved in DNA metabolism; it is required for DNA replication and normal SOS inducibility. RecF binds preferentially to single-stranded, linear DNA. It also seems to bind ATP. The sequence is that of DNA replication and repair protein RecF from Lachnoclostridium phytofermentans (strain ATCC 700394 / DSM 18823 / ISDg) (Clostridium phytofermentans).